Reading from the N-terminus, the 369-residue chain is Phospho-N-acetylmuramoyl-pentapeptide-transferase (369 aa).

A run of 10 helical transmembrane segments spans residues 2 to 22 (IAILLAVAFGITFTLFTTPFF), 54 to 74 (GLVIVVASIISYFLANFFLGL), 80 to 100 (GLLVIFMFVGMSLVGFLDDIL), 113 to 133 (FYKVVLQSFIAVPFALLTFLV), 158 to 178 (ALFSLGIIGVFSAWVLYLLWI), 195 to 215 (LDGLAAGAMIFTMLAYVVIGF), 241 to 261 (PLDMSILAAAILGSLLGFLWW), 268 to 288 (IMMGDTGALALGGAAAALSIL), 293 to 313 (LLFLVLGGLFVIEAGSVILQI), and 347 to 367 (FWIIAGLFTALGIGLFYADWL).

The protein belongs to the glycosyltransferase 4 family. MraY subfamily. Requires Mg(2+) as cofactor.

It is found in the cell membrane. It catalyses the reaction UDP-N-acetyl-alpha-D-muramoyl-L-alanyl-gamma-D-glutamyl-meso-2,6-diaminopimeloyl-D-alanyl-D-alanine + di-trans,octa-cis-undecaprenyl phosphate = di-trans,octa-cis-undecaprenyl diphospho-N-acetyl-alpha-D-muramoyl-L-alanyl-D-glutamyl-meso-2,6-diaminopimeloyl-D-alanyl-D-alanine + UMP. It functions in the pathway cell wall biogenesis; peptidoglycan biosynthesis. Catalyzes the initial step of the lipid cycle reactions in the biosynthesis of the cell wall peptidoglycan: transfers peptidoglycan precursor phospho-MurNAc-pentapeptide from UDP-MurNAc-pentapeptide onto the lipid carrier undecaprenyl phosphate, yielding undecaprenyl-pyrophosphoryl-MurNAc-pentapeptide, known as lipid I. In Tropheryma whipplei (strain TW08/27) (Whipple's bacillus), this protein is Phospho-N-acetylmuramoyl-pentapeptide-transferase.